Here is a 757-residue protein sequence, read N- to C-terminus: Endosialin (757 aa).

Residues 1-17 (MLLRLLLAWAAAGPTLG) form the signal peptide. At 18-687 (QDPWAAEPRA…EHSQRDDRWL (670 aa)) the chain is on the extracellular side. The C-type lectin domain occupies 30–156 (GPSSCYALFP…CTLAVDGYLC (127 aa)). The O-linked (GalNAc...) threonine glycan is linked to T60. An intrachain disulfide couples C131 to C147. The 71-residue stretch at 162–232 (GACPALQDEA…WSRAGPLCLG (71 aa)) folds into the Sushi domain. An EGF-like; calcium-binding domain is found at 312 to 351 (DTDECQIAGVCQQMCVNYVGGFECYCSEGHELEADGISCS). Disulfide bonds link C316–C326, C322–C335, and C337–C350. O-linked (GalNAc...) threonine glycosylation is found at T401, T428, T448, T456, T459, T472, T519, T541, T543, T544, T545, T587, T593, T594, and T595. S598 and S601 each carry an O-linked (GalNAc...) serine glycan. Residues T612 and T619 are each glycosylated (O-linked (GalNAc...) threonine). The segment covering 618–627 (PTLLPSQSPT) has biased composition (low complexity). A disordered region spans residues 618-662 (PTLLPSQSPTNQTSPISPTHPHSKAPQIPREDGPSPKLALWLPSP). Residues S623 and S625 are each glycosylated (O-linked (GalNAc...) serine). 2 O-linked (GalNAc...) threonine glycosylation sites follow: T627 and T630. O-linked (GalNAc...) serine glycosylation is present at S631. The O-linked (GalNAc...) threonine glycan is linked to T636. O-linked (GalNAc...) serine glycosylation occurs at S640. Residues 688–708 (LVALLVPTCVFLVVLLALGIV) traverse the membrane as a helical segment. Residues 709-757 (YCTRCGPHAPNKRITDCYRWVIHAGSKSPTEPMPPRGSLTGVQTCRTSV) lie on the Cytoplasmic side of the membrane. The tract at residues 737–757 (PTEPMPPRGSLTGVQTCRTSV) is disordered. S746 bears the Phosphoserine mark. Polar residues predominate over residues 748-757 (TGVQTCRTSV).

As to quaternary structure, interacts with PDGFRA; this interaction promotes PDGF receptor signaling pathway. Interacts with integrin beta-1/ITGB1. Interacts with insulin receptor/INSR; this interaction diminishes INSR autophosphorylation. O-glycosylated with sialylated oligosaccharides. Post-translationally, may be N-glycosylated. As to expression, expressed in tumor endothelial cells but absent or barely detectable in normal endothelial cells. Expressed in metastatic lesions of the liver and during angiogenesis of corpus luteum formation and wound healing. Expressed in vascular endothelial cells of malignant tumors but not in normal blood vessels. Expressed in stromal fibroblasts. Strongly expressed in pericytes. Expressed on stromal cells and cells with lymphoid morphology such a T-cells.

The protein localises to the membrane. Cell surface glycoprotein involved in various biological processes including angiogenesis, immune response modulation, and tissue remodeling and repair. Participates in pericyte proliferation through positive modulation of the PDGF receptor signaling pathway. Acts as a scaffold for factor X, triggering allosteric changes and the spatial re-alignment of factor X with the TF-factor VIIa complex, thereby enhancing coagulation activation. Modulates the insulin signaling pathway by interacting with insulin receptor/INSR and by diminishing its capacity to be autophosphorylated in response to insulin. Also regulates LPS-induced inflammatory response in macrophages by favoring the production of proinflammatory cytokines. In human, negatively regulates T-cell proliferation compared with stromal cells where it increases proliferation. The sequence is that of Endosialin (CD248) from Homo sapiens (Human).